Reading from the N-terminus, the 215-residue chain is Ribose-5-phosphate isomerase A (215 aa).

Substrate is bound by residues T26–T29, D79–D82, and K92–G95. E101 acts as the Proton acceptor in catalysis. Residue K119 coordinates substrate.

This sequence belongs to the ribose 5-phosphate isomerase family. As to quaternary structure, homodimer.

The catalysed reaction is aldehydo-D-ribose 5-phosphate = D-ribulose 5-phosphate. It functions in the pathway carbohydrate degradation; pentose phosphate pathway; D-ribose 5-phosphate from D-ribulose 5-phosphate (non-oxidative stage): step 1/1. In terms of biological role, catalyzes the reversible conversion of ribose-5-phosphate to ribulose 5-phosphate. This Xanthomonas campestris pv. campestris (strain 8004) protein is Ribose-5-phosphate isomerase A.